We begin with the raw amino-acid sequence, 620 residues long: Probable potassium transport system protein Kup 1 (620 aa).

12 helical membrane-spanning segments follow: residues 10–30, 50–70, 102–122, 138–158, 168–188, 211–231, 246–266, 284–304, 336–356, 368–388, 393–413, and 415–435; these read LLIS…LYAL, VLSL…VIVI, MLLG…TPAI, LTPY…MIQK, FGPV…VNIV, MMSF…EALY, WFAL…ALLL, MVVP…QAVI, IYIP…VIGF, IAVT…MALM, WIAV…FFFA, and IIKV…SFTV.

It belongs to the HAK/KUP transporter (TC 2.A.72) family.

The protein resides in the cell inner membrane. The catalysed reaction is K(+)(in) + H(+)(in) = K(+)(out) + H(+)(out). Functionally, transport of potassium into the cell. Likely operates as a K(+):H(+) symporter. The protein is Probable potassium transport system protein Kup 1 of Rhodopseudomonas palustris (strain BisB18).